We begin with the raw amino-acid sequence, 57 residues long: uncharacterized protein (57 aa).

Residues 3–23 form a helical membrane-spanning segment; that stretch reads PLTLLIIIGGVILGNELIISL. Residues 38 to 57 form a disordered region; that stretch reads KHKHKTQENYETFASDKKRT.

The protein localises to the host membrane. This is an uncharacterized protein from Acidianus bottle-shaped virus (isolate Italy/Pozzuoli) (ABV).